A 361-amino-acid polypeptide reads, in one-letter code: 24-methylenesterol C-methyltransferase 2 (361 aa).

Belongs to the class I-like SAM-binding methyltransferase superfamily. Erg6/SMT family.

The catalysed reaction is 24-methylidenelophenol + S-adenosyl-L-methionine = (Z)-24-ethylidenelophenol + S-adenosyl-L-homocysteine + H(+). The protein operates within steroid biosynthesis; sterol biosynthesis. In terms of biological role, catalyzes the methyl transfer from S-adenosyl-methionine to the methylene group of 24-methylene lophenol to form 24-ethylidene lophenol. The protein is 24-methylenesterol C-methyltransferase 2 (SMT2) of Arabidopsis thaliana (Mouse-ear cress).